A 244-amino-acid chain; its full sequence is Guanine nucleotide exchange factor rei-1 (244 aa).

Coiled coils occupy residues 6–39 (DQLI…KKQF) and 81–144 (VQQA…KAEK). Residues 221–244 (DQIHQERSSQSSLAPSSDAESDSS) are disordered. Low complexity predominate over residues 228-238 (SSQSSLAPSSD).

It belongs to the SH3BP5 family. Homodimer, tetramer and multimer. Interacts with rab-11.1. Binds preferentially to the GDP-bound form of rab-11.1. As to expression, expressed in germ cells.

It localises to the cytoplasmic granule. Its subcellular location is the golgi apparatus membrane. Functionally, guanine nucleotide exchange factor for Rab GTPase Rab-11.1. Spatially and temporally regulates the distribution of Rab-11.1 to target membranes during embryogenesis. Plays a role in cytokinesis, probably by targeting rab-11.1 to the cleavage furrows. The chain is Guanine nucleotide exchange factor rei-1 from Caenorhabditis elegans.